A 500-amino-acid polypeptide reads, in one-letter code: Cytochrome P450 71B22 (500 aa).

A helical membrane pass occupies residues methionine 1–leucine 21. Cysteine 441 serves as a coordination point for heme.

The protein belongs to the cytochrome P450 family. It depends on heme as a cofactor.

It localises to the membrane. This is Cytochrome P450 71B22 (CYP71B22) from Arabidopsis thaliana (Mouse-ear cress).